The sequence spans 427 residues: Glutamate-1-semialdehyde 2,1-aminomutase (427 aa).

Lys-267 is subject to N6-(pyridoxal phosphate)lysine.

Belongs to the class-III pyridoxal-phosphate-dependent aminotransferase family. HemL subfamily. Homodimer. Requires pyridoxal 5'-phosphate as cofactor.

The protein resides in the cytoplasm. The catalysed reaction is (S)-4-amino-5-oxopentanoate = 5-aminolevulinate. The protein operates within porphyrin-containing compound metabolism; protoporphyrin-IX biosynthesis; 5-aminolevulinate from L-glutamyl-tRNA(Glu): step 2/2. This chain is Glutamate-1-semialdehyde 2,1-aminomutase, found in Sulfurihydrogenibium azorense (strain DSM 15241 / OCM 825 / Az-Fu1).